Consider the following 278-residue polypeptide: Acyl-[acyl-carrier-protein]--UDP-N-acetylglucosamine O-acyltransferase (278 aa).

Belongs to the transferase hexapeptide repeat family. LpxA subfamily. Homotrimer.

Its subcellular location is the cytoplasm. It catalyses the reaction a (3R)-hydroxyacyl-[ACP] + UDP-N-acetyl-alpha-D-glucosamine = a UDP-3-O-[(3R)-3-hydroxyacyl]-N-acetyl-alpha-D-glucosamine + holo-[ACP]. It participates in glycolipid biosynthesis; lipid IV(A) biosynthesis; lipid IV(A) from (3R)-3-hydroxytetradecanoyl-[acyl-carrier-protein] and UDP-N-acetyl-alpha-D-glucosamine: step 1/6. Functionally, involved in the biosynthesis of lipid A, a phosphorylated glycolipid that anchors the lipopolysaccharide to the outer membrane of the cell. The sequence is that of Acyl-[acyl-carrier-protein]--UDP-N-acetylglucosamine O-acyltransferase from Brucella abortus (strain S19).